We begin with the raw amino-acid sequence, 226 residues long: Isoprenyl transferase (226 aa).

D12 is an active-site residue. Residue D12 coordinates Mg(2+). Substrate contacts are provided by residues 13–16 (GNAR), W17, K25, H29, and 57–59 (SSE). N60 acts as the Proton acceptor in catalysis. Substrate is bound by residues W61, R63, R174, and 180 to 182 (RIS). Position 193 (E193) interacts with Mg(2+).

This sequence belongs to the UPP synthase family. In terms of assembly, homodimer. Requires Mg(2+) as cofactor.

Catalyzes the condensation of isopentenyl diphosphate (IPP) with allylic pyrophosphates generating different type of terpenoids. The sequence is that of Isoprenyl transferase from Rickettsia typhi (strain ATCC VR-144 / Wilmington).